A 451-amino-acid polypeptide reads, in one-letter code: Phosphoglucosamine mutase (451 aa).

The Phosphoserine intermediate role is filled by serine 101. Mg(2+) is bound by residues serine 101, aspartate 240, aspartate 242, and aspartate 244. Serine 101 bears the Phosphoserine mark.

This sequence belongs to the phosphohexose mutase family. Mg(2+) serves as cofactor. Activated by phosphorylation.

The catalysed reaction is alpha-D-glucosamine 1-phosphate = D-glucosamine 6-phosphate. Catalyzes the conversion of glucosamine-6-phosphate to glucosamine-1-phosphate. In Nitrosococcus oceani (strain ATCC 19707 / BCRC 17464 / JCM 30415 / NCIMB 11848 / C-107), this protein is Phosphoglucosamine mutase.